A 311-amino-acid chain; its full sequence is Probable dihydroorotate dehydrogenase A (fumarate) (311 aa).

Substrate-binding positions include Lys-45, Asn-69 to Leu-73, and Asn-128. FMN is bound at residue Lys-45–Thr-46. Asn-128 lines the FMN pocket. Cys-131 functions as the Nucleophile in the catalytic mechanism. FMN contacts are provided by Lys-165 and Val-193. Asn-194–Ser-195 lines the substrate pocket. Residues Gly-220, Gly-248–Gly-249, and Gly-270–Thr-271 contribute to the FMN site.

This sequence belongs to the dihydroorotate dehydrogenase family. Type 1 subfamily. In terms of assembly, homodimer. FMN serves as cofactor.

It is found in the cytoplasm. The enzyme catalyses (S)-dihydroorotate + fumarate = orotate + succinate. Its pathway is pyrimidine metabolism; UMP biosynthesis via de novo pathway. In terms of biological role, catalyzes the conversion of dihydroorotate to orotate with fumarate as the electron acceptor. The chain is Probable dihydroorotate dehydrogenase A (fumarate) (pyrDA) from Streptococcus pneumoniae (strain ATCC BAA-255 / R6).